We begin with the raw amino-acid sequence, 341 residues long: Biotin synthase (341 aa).

Residues 53–272 (NHVETASLLS…IAVARIMMPK (220 aa)) enclose the Radical SAM core domain. C68, C72, and C75 together coordinate [4Fe-4S] cluster. [2Fe-2S] cluster-binding residues include C112, C143, C203, and R276.

This sequence belongs to the radical SAM superfamily. Biotin synthase family. Homodimer. [4Fe-4S] cluster serves as cofactor. [2Fe-2S] cluster is required as a cofactor.

The catalysed reaction is (4R,5S)-dethiobiotin + (sulfur carrier)-SH + 2 reduced [2Fe-2S]-[ferredoxin] + 2 S-adenosyl-L-methionine = (sulfur carrier)-H + biotin + 2 5'-deoxyadenosine + 2 L-methionine + 2 oxidized [2Fe-2S]-[ferredoxin]. It functions in the pathway cofactor biosynthesis; biotin biosynthesis; biotin from 7,8-diaminononanoate: step 2/2. Catalyzes the conversion of dethiobiotin (DTB) to biotin by the insertion of a sulfur atom into dethiobiotin via a radical-based mechanism. In Nitrobacter winogradskyi (strain ATCC 25391 / DSM 10237 / CIP 104748 / NCIMB 11846 / Nb-255), this protein is Biotin synthase.